A 60-amino-acid polypeptide reads, in one-letter code: Large ribosomal subunit protein bL32 (60 aa).

Residues 1–16 are compositionally biased toward basic residues; it reads MAVPRRKTSPSRRGMR. Residues 1 to 60 are disordered; sequence MAVPRRKTSPSRRGMRRSADAIKRPTYVEDKDSGELRRPHHLDLKTGMYKGRQVLKKKDS. The segment covering 17–44 has biased composition (basic and acidic residues); it reads RSADAIKRPTYVEDKDSGELRRPHHLDL.

This chain is Large ribosomal subunit protein bL32, found in Rhodopseudomonas palustris (strain ATCC BAA-98 / CGA009).